Consider the following 411-residue polypeptide: MAYLSRATATLARQDCSNGCSASYAEEEELEASTESYDEEGGSEASTQTFRAKDLIITKADVLKKKPDPSSLVFGASFTDHMLMVEWTSKYGWDKPHIKPFENLSIHPAASVLHYAVELFEGLKAFRGVDNKIRLFRPDLNMKRMCRSAVRTTLPEFDKEELLQCVLQLIQLDREWVPYSTSASLYIRPTFIGIEPSLGVKKPSKALLFVILSPVGSYFSNGTFSPVSLWANPKFVRSWKGGTGDFKMGCNYGSSLLAQCEAAENGCHQVLWLYGKENRITEVGTMNLFLYWINKDGEEELATPPLDGVILPGVTRQSILELGEEWGEFKVCERHITMDDLSTALEENRVKEMFGSGTACVVCPVASILYKGQMLHIPTMENGHKLSSRIMAKLTDIQYGRIKSEWTLELP.

Lysine 247 carries the N6-(pyridoxal phosphate)lysine modification.

Belongs to the class-IV pyridoxal-phosphate-dependent aminotransferase family. As to quaternary structure, homodimer. The cofactor is pyridoxal 5'-phosphate. Post-translationally, the N-terminus is blocked. In terms of tissue distribution, brain, low expression in ovary and placenta, but not found in liver, kidney, and skeletal muscle.

Its subcellular location is the cytoplasm. It catalyses the reaction L-leucine + 2-oxoglutarate = 4-methyl-2-oxopentanoate + L-glutamate. The enzyme catalyses L-isoleucine + 2-oxoglutarate = (S)-3-methyl-2-oxopentanoate + L-glutamate. It carries out the reaction L-valine + 2-oxoglutarate = 3-methyl-2-oxobutanoate + L-glutamate. Catalyzes the first reaction in the catabolism of the essential branched chain amino acids leucine, isoleucine, and valine. In Rattus norvegicus (Rat), this protein is Branched-chain-amino-acid aminotransferase, cytosolic (Bcat1).